A 190-amino-acid polypeptide reads, in one-letter code: Orotate phosphoribosyltransferase (190 aa).

114-122 (EDVITTGGS) contacts 5-phospho-alpha-D-ribose 1-diphosphate. Residues T118 and R146 each coordinate orotate.

It belongs to the purine/pyrimidine phosphoribosyltransferase family. PyrE subfamily. Homodimer. Requires Mg(2+) as cofactor.

It carries out the reaction orotidine 5'-phosphate + diphosphate = orotate + 5-phospho-alpha-D-ribose 1-diphosphate. It participates in pyrimidine metabolism; UMP biosynthesis via de novo pathway; UMP from orotate: step 1/2. Its function is as follows. Catalyzes the transfer of a ribosyl phosphate group from 5-phosphoribose 1-diphosphate to orotate, leading to the formation of orotidine monophosphate (OMP). The sequence is that of Orotate phosphoribosyltransferase from Pelotomaculum thermopropionicum (strain DSM 13744 / JCM 10971 / SI).